We begin with the raw amino-acid sequence, 278 residues long: Small ribosomal subunit protein uS3 (278 aa).

One can recognise a KH type-2 domain in the interval 38-106 (IRKLLATGLE…QVQLNILEVK (69 aa)). The segment at 215 to 278 (AAAAPAGADR…AAGQPETTES (64 aa)) is disordered. Over residues 238–278 (SGASGTTATSTDAGRAATEEAPATDAAATAPAAGQPETTES) the composition is skewed to low complexity.

This sequence belongs to the universal ribosomal protein uS3 family. As to quaternary structure, part of the 30S ribosomal subunit. Forms a tight complex with proteins S10 and S14.

In terms of biological role, binds the lower part of the 30S subunit head. Binds mRNA in the 70S ribosome, positioning it for translation. This is Small ribosomal subunit protein uS3 from Mycolicibacterium gilvum (strain PYR-GCK) (Mycobacterium gilvum (strain PYR-GCK)).